Here is a 668-residue protein sequence, read N- to C-terminus: CLK4-associating serine/arginine rich protein (668 aa).

Ser101 carries the post-translational modification Phosphoserine. 2 disordered regions span residues 173–232 (AEVE…GMAD) and 252–668 (AKAL…HYRH). The span at 182–214 (PEEEESPAEEESNSDEDEVIPDIDVEVDVDELN) shows a compositional bias: acidic residues. Basic residues predominate over residues 265–283 (RRSRRQRREFREKRLRGRK). 2 positions are modified to phosphoserine: Ser285 and Ser294. The segment covering 290 to 313 (ARRDSPTYDPYKRSPSESSSESRS) has biased composition (basic and acidic residues). Thr327 is subject to Phosphothreonine. A phosphoserine mark is found at Ser331 and Ser335. Positions 340-353 (AAAAAAAAASGAAP) are enriched in low complexity. Over residues 354 to 365 (GKPPAPPQPGGP) the composition is skewed to pro residues. A compositionally biased stretch (low complexity) spans 378–395 (SSSSASRTSSSRSSSRSS). A compositionally biased stretch (basic residues) spans 396–435 (SRSRRGYYRSGRHARSRSRSWSRSRSRSRRYSRSRSRGRR). Residues 436 to 446 (HSDGGSRDGHR) show a composition bias toward basic and acidic residues. Positions 475–486 (RGARGPRHHSSS) are enriched in basic residues. 2 stretches are compositionally biased toward low complexity: residues 487 to 510 (HSRS…SRSQ) and 518 to 527 (QSHSQSQSHS). A Phosphoserine modification is found at Ser541. At Thr567 the chain carries Phosphothreonine. Residues 579-641 (ALNRQFKADK…ERQYSRQSRS (63 aa)) adopt a coiled-coil conformation. 2 stretches are compositionally biased toward basic and acidic residues: residues 584–611 (FKAD…ELRA) and 619–635 (KERE…ERQY). A compositionally biased stretch (low complexity) spans 636–645 (SRQSRSPSPR). Basic residues predominate over residues 653–668 (SRRRSRSRSRSPHYRH).

It belongs to the splicing factor SR family. Probably interacts with CLK4. Phosphorylated in vitro by CLK4.

The protein localises to the nucleus. In terms of biological role, probably functions as an alternative splicing regulator. May regulate the mRNA splicing of genes such as CLK1. May act by regulating members of the CLK kinase family. The polypeptide is CLK4-associating serine/arginine rich protein (Clasrp) (Rattus norvegicus (Rat)).